Consider the following 318-residue polypeptide: DNA repair nuclease/redox regulator APEX1 (318 aa).

The disordered stretch occupies residues 1–59; the sequence is MPKRGKKGAVVEDAEEPKTEPEAKKSKAGAKKNEKEAVGEGAVLYEDPPDQKTSPSGKS. The tract at residues 2–33 is necessary for interaction with YBX1, binding to RNA, association together with NPM1 to rRNA, endoribonuclease activity on abasic RNA and localization in the nucleoli; that stretch reads PKRGKKGAVVEDAEEPKTEPEAKKSKAGAKKN. Lys6 and Lys7 each carry N6-acetyllysine; by EP300. The Nuclear localization signal (NLS) motif lies at 8–13; that stretch reads GAVVED. The segment covering 16–38 has biased composition (basic and acidic residues); the sequence is EPKTEPEAKKSKAGAKKNEKEAV. Positions 23–33 are necessary for interaction with NPM1 and for efficient rRNA binding; it reads AKKSKAGAKKN. Lys27, Lys31, Lys32, and Lys35 each carry N6-acetyllysine. Ser54 carries the phosphoserine modification. The Nuclear export signal (NES) signature appears at 64-80; sequence ICSWNVDGLRAWIKKKG. Cys65 is modified (S-nitrosocysteine; alternate). Cys65 and Cys93 form a disulfide bridge. Asp70 serves as a coordination point for Mg(2+). S-nitrosocysteine; alternate is present on Cys93. Glu96 is a Mg(2+) binding site. Tyr171 is an active-site residue. Lys197 is subject to N6-acetyllysine. Mg(2+)-binding residues include Asp210 and Asn212. Asp210 functions as the Proton donor/acceptor in the catalytic mechanism. Thr233 bears the Phosphothreonine; by CDK5 mark. Residues 289-318 form a mitochondrial targeting sequence (MTS) region; that stretch reads QSVLPALCDSKIRSKALGSDHCPITLYLAL. Asp308 provides a ligand contact to Mg(2+). Cys310 is modified (S-nitrosocysteine).

The protein belongs to the DNA repair enzymes AP/ExoA family. Monomer. Homodimer; disulfide-linked. Component of the SET complex, composed of at least APEX1, SET, ANP32A, HMGB2, NME1 and TREX1. Associates with the dimer XRCC5/XRCC6 in a DNA-dependent manner. Interacts with SIRT1; the interaction is increased in the context of genotoxic stress. Interacts with HDAC1, HDAC2 and HDAC3; the interactions are not dependent on the APEX1 acetylation status. Interacts with XRCC1; the interaction is induced by SIRT1 and increased with the APEX1 acetylated form. Interacts with NPM1 (via N-terminal domain); the interaction is RNA-dependent and decreases in hydrogen peroxide-damaged cells. Interacts (via N-terminus) with YBX1 (via C-terminus); the interaction is increased in presence of APEX1 acetylated at Lys-6 and Lys-7. Interacts with HNRNPL; the interaction is DNA-dependent. Interacts (via N-terminus) with KPNA1 and KPNA2. Interacts with TXN; the interaction stimulates the FOS/JUN AP-1 complex DNA-binding activity in a redox-dependent manner. Interacts with GZMA, KRT8, MDM2, POLB, PRDX6, PRPF19, RPLP0, TOMM20 and WDR77. Binds to CDK5. The cofactor is Mg(2+). Requires Mn(2+) as cofactor. Phosphorylated. Phosphorylation by kinase PKC or casein kinase CK2 results in enhanced redox activity that stimulates binding of the FOS/JUN AP-1 complex to its cognate binding site. AP-endodeoxyribonuclease activity is not affected by CK2-mediated phosphorylation. Phosphorylation of Thr-233 by CDK5 in response to MPP(+)/MPTP (1-methyl-4-phenylpyridinium) reduces AP-endodeoxyribonuclease activity resulting in accumulation of DNA damage and contributing to neuronal death. Post-translationally, acetylated on Lys-6 and Lys-7. Acetylation is increased by the transcriptional coactivator EP300 acetyltransferase, genotoxic agents like H(2)O(2) and methyl methanesulfonate (MMS). Acetylation increases its binding affinity to the negative calcium response element (nCaRE) DNA promoter. The acetylated form induces a stronger binding of YBX1 to the Y-box sequence in the MDR1 promoter than the unacetylated form. Deacetylated on lysines. Lys-6 and Lys-7 are deacetylated by SIRT1. In terms of processing, cleaved at Lys-31 by granzyme A to create the mitochondrial form; leading in reduction of binding to DNA, AP endodeoxyribonuclease activity, redox activation of transcription factors and to enhanced cell death. Cleaved by granzyme K; leading to intracellular ROS accumulation and enhanced cell death after oxidative stress. Cys-69 and Cys-93 are nitrosylated in response to nitric oxide (NO) and lead to the exposure of the nuclear export signal (NES). Post-translationally, ubiquitinated by MDM2; leading to translocation to the cytoplasm and proteasomal degradation. In terms of tissue distribution, the mitochondrial form is expressed in liver (at protein level). Thymus.

It is found in the nucleus. The protein localises to the nucleolus. It localises to the nucleus speckle. Its subcellular location is the endoplasmic reticulum. The protein resides in the cytoplasm. It is found in the mitochondrion. It carries out the reaction Exonucleolytic cleavage in the 3'- to 5'-direction to yield nucleoside 5'-phosphates.. NPM1 stimulates endodeoxyribonuclease activity on double-stranded DNA with AP sites, but inhibits endoribonuclease activity on single-stranded RNA containing AP sites. Its function is as follows. Multifunctional protein that plays a central role in the cellular response to oxidative stress. The two major activities of APEX1 are DNA repair and redox regulation of transcriptional factors. Functions as an apurinic/apyrimidinic (AP) endodeoxyribonuclease in the DNA base excision repair (BER) pathway of DNA lesions induced by oxidative and alkylating agents. Initiates repair of AP sites in DNA by catalyzing hydrolytic incision of the phosphodiester backbone immediately adjacent to the damage, generating a single-strand break with 5'-deoxyribose phosphate and 3'-hydroxyl ends. Also incises at AP sites in the DNA strand of DNA/RNA hybrids, single-stranded DNA regions of R-loop structures, and single-stranded RNA molecules. Has 3'-5' exoribonuclease activity on mismatched deoxyribonucleotides at the 3' termini of nicked or gapped DNA molecules during short-patch BER. Possesses DNA 3' phosphodiesterase activity capable of removing lesions (such as phosphoglycolate) blocking the 3' side of DNA strand breaks. May also play a role in the epigenetic regulation of gene expression by participating in DNA demethylation. Acts as a loading factor for POLB onto non-incised AP sites in DNA and stimulates the 5'-terminal deoxyribose 5'-phosphate (dRp) excision activity of POLB. Plays a role in the protection from granzyme-mediated cellular repair leading to cell death. Also involved in the DNA cleavage step of class switch recombination (CSR). On the other hand, APEX1 also exerts reversible nuclear redox activity to regulate DNA binding affinity and transcriptional activity of transcriptional factors by controlling the redox status of their DNA-binding domain, such as the FOS/JUN AP-1 complex after exposure to IR. Involved in calcium-dependent down-regulation of parathyroid hormone (PTH) expression by binding to negative calcium response elements (nCaREs). Together with HNRNPL or the dimer XRCC5/XRCC6, associates with nCaRE, acting as an activator of transcriptional repression. Stimulates the YBX1-mediated MDR1 promoter activity, when acetylated at Lys-6 and Lys-7, leading to drug resistance. Also acts as an endoribonuclease involved in the control of single-stranded RNA metabolism. Plays a role in regulating MYC mRNA turnover by preferentially cleaving in between UA and CA dinucleotides of the MYC coding region determinant (CRD). In association with NMD1, plays a role in the rRNA quality control process during cell cycle progression. Associates, together with YBX1, on the MDR1 promoter. Together with NPM1, associates with rRNA. Binds DNA and RNA. The polypeptide is DNA repair nuclease/redox regulator APEX1 (APEX1) (Bos taurus (Bovine)).